Consider the following 114-residue polypeptide: Large ribosomal subunit protein uL18 (114 aa).

The protein belongs to the universal ribosomal protein uL18 family. Part of the 50S ribosomal subunit; part of the 5S rRNA/L5/L18/L25 subcomplex. Contacts the 5S and 23S rRNAs.

Functionally, this is one of the proteins that bind and probably mediate the attachment of the 5S RNA into the large ribosomal subunit, where it forms part of the central protuberance. The protein is Large ribosomal subunit protein uL18 of Porphyromonas gingivalis (strain ATCC 33277 / DSM 20709 / CIP 103683 / JCM 12257 / NCTC 11834 / 2561).